We begin with the raw amino-acid sequence, 345 residues long: MFIDSVKITLASGDGGKGAVSFRREKHVPLGGPDGGDGGNGGDIIFICDNNTHTLVNFKGKRELRAQNGAGGMGRNKNGKKGENLELVVPEGTQVIDAQTNEILLDLTKEGQRELFLKGGKGGLGNTHFKHATNQRPDYAQPGIKGESRLVRLELKLIADVGLVGFPNVGKSTLISVVSNAKPEIANYEFTTLTPKLGLVDVDEYNSFVMTDIPGIIQGASGGKGLGLAFLKHIERTSFLLFVLDPMREMLLKEQFIVLRKELEKFSDELFGRKFGIMISKSDSVNLGEEFAEQIALNINELENYLKEINNPQSFLIKVSSLEKTGLKELKFMLLEEIKALRNNK.

The 158-residue stretch at 1–158 (MFIDSVKITL…RLVRLELKLI (158 aa)) folds into the Obg domain. The 181-residue stretch at 159-339 (ADVGLVGFPN…LKFMLLEEIK (181 aa)) folds into the OBG-type G domain. Residues 165–172 (GFPNVGKS), 190–194 (FTTLT), 212–215 (DIPG), 280–283 (SKSD), and 320–322 (SSL) contribute to the GTP site. Mg(2+) is bound by residues serine 172 and threonine 192.

It belongs to the TRAFAC class OBG-HflX-like GTPase superfamily. OBG GTPase family. As to quaternary structure, monomer. The cofactor is Mg(2+).

Its subcellular location is the cytoplasm. In terms of biological role, an essential GTPase which binds GTP, GDP and possibly (p)ppGpp with moderate affinity, with high nucleotide exchange rates and a fairly low GTP hydrolysis rate. Plays a role in control of the cell cycle, stress response, ribosome biogenesis and in those bacteria that undergo differentiation, in morphogenesis control. This is GTPase Obg from Campylobacter jejuni subsp. doylei (strain ATCC BAA-1458 / RM4099 / 269.97).